A 61-amino-acid chain; its full sequence is MDPNCSCATGGSCTCTGSCKCKECKCTSCKKSCCSCCPMSCAKCAQGCICKGASEKCSCCA.

At M1 the chain carries N-acetylmethionine. Residues 1–29 (MDPNCSCATGGSCTCTGSCKCKECKCTSC) are beta. 18 residues coordinate a divalent metal cation: C5, C7, C13, C15, C19, C21, C24, C26, C29, C33, C34, C36, C37, C41, C44, C48, C50, and C57. The segment at 30 to 61 (KKSCCSCCPMSCAKCAQGCICKGASEKCSCCA) is alpha. Position 58 is a phosphoserine (S58). A divalent metal cation is bound by residues C59 and C60.

It belongs to the metallothionein superfamily. Type 1 family. As to quaternary structure, monomer.

Functionally, metallothioneins have a high content of cysteine residues that bind various heavy metals; these proteins are transcriptionally regulated by both heavy metals and glucocorticoids. This chain is Metallothionein-1A (MT1A), found in Homo sapiens (Human).